Reading from the N-terminus, the 427-residue chain is Mitochondrial distribution and morphology protein 12 (427 aa).

Residues 1-387 (MSFDINWNQL…WPSWICIDMN (387 aa)) enclose the SMP-LTD domain. Residues 81-96 (NDSKDEHLKNHGDGIN) show a composition bias toward basic and acidic residues. 2 disordered regions span residues 81 to 168 (NDSK…APPL) and 387 to 427 (NDDD…EAGE). Acidic residues predominate over residues 106–133 (LDDEDEDDEDDDEDDEDEEEEDEDDYDD). Over residues 146 to 161 (LNFNENSTTPSANSFA) the composition is skewed to polar residues. Acidic residues predominate over residues 387–402 (NDDDDEEEEEESEDND). Residues 411-427 (NDGKHGDGRTDETEAGE) show a composition bias toward basic and acidic residues.

The protein belongs to the MDM12 family. As to quaternary structure, component of the ER-mitochondria encounter structure (ERMES) or MDM complex, composed of MMM1, MDM10, MDM12 and MDM34. An MMM1 homodimer associates with one molecule of MDM12 on each side in a pairwise head-to-tail manner, and the SMP-LTD domains of MMM1 and MDM12 generate a continuous hydrophobic tunnel for phospholipid trafficking.

It is found in the mitochondrion outer membrane. The protein resides in the endoplasmic reticulum membrane. Component of the ERMES/MDM complex, which serves as a molecular tether to connect the endoplasmic reticulum (ER) and mitochondria. Components of this complex are involved in the control of mitochondrial shape and protein biogenesis, and function in nonvesicular lipid trafficking between the ER and mitochondria. MDM12 is required for the interaction of the ER-resident membrane protein MMM1 and the outer mitochondrial membrane-resident beta-barrel protein MDM10. The MDM12-MMM1 subcomplex functions in the major beta-barrel assembly pathway that is responsible for biogenesis of all mitochondrial outer membrane beta-barrel proteins, and acts in a late step after the SAM complex. The MDM10-MDM12-MMM1 subcomplex further acts in the TOM40-specific pathway after the action of the MDM12-MMM1 complex. Essential for establishing and maintaining the structure of mitochondria and maintenance of mtDNA nucleoids. This chain is Mitochondrial distribution and morphology protein 12, found in Candida albicans (strain WO-1) (Yeast).